Here is a 424-residue protein sequence, read N- to C-terminus: Kynureninase (424 aa).

Pyridoxal 5'-phosphate contacts are provided by residues L109, T110, F137–D140, D222, H225, and Y247. Position 248 is an N6-(pyridoxal phosphate)lysine (K248). Pyridoxal 5'-phosphate contacts are provided by W278 and N306.

It belongs to the kynureninase family. Homodimer. Pyridoxal 5'-phosphate is required as a cofactor.

The enzyme catalyses L-kynurenine + H2O = anthranilate + L-alanine + H(+). It carries out the reaction 3-hydroxy-L-kynurenine + H2O = 3-hydroxyanthranilate + L-alanine + H(+). Its pathway is amino-acid degradation; L-kynurenine degradation; L-alanine and anthranilate from L-kynurenine: step 1/1. The protein operates within cofactor biosynthesis; NAD(+) biosynthesis; quinolinate from L-kynurenine: step 2/3. Catalyzes the cleavage of L-kynurenine (L-Kyn) and L-3-hydroxykynurenine (L-3OHKyn) into anthranilic acid (AA) and 3-hydroxyanthranilic acid (3-OHAA), respectively. The sequence is that of Kynureninase from Koribacter versatilis (strain Ellin345).